The sequence spans 400 residues: S-adenosylmethionine synthase (400 aa).

136 to 141 contacts ATP; the sequence is GTGSTD.

The protein belongs to the AdoMet synthase 2 family. Requires Mg(2+) as cofactor.

It catalyses the reaction L-methionine + ATP + H2O = S-adenosyl-L-methionine + phosphate + diphosphate. Its pathway is amino-acid biosynthesis; S-adenosyl-L-methionine biosynthesis; S-adenosyl-L-methionine from L-methionine: step 1/1. In terms of biological role, catalyzes the formation of S-adenosylmethionine from methionine and ATP. The chain is S-adenosylmethionine synthase from Methanospirillum hungatei JF-1 (strain ATCC 27890 / DSM 864 / NBRC 100397 / JF-1).